We begin with the raw amino-acid sequence, 228 residues long: Expansin-B13 (228 aa).

The signal sequence occupies residues 1 to 22 (MASSSLLLASVVVAAMVSAVSC). The N-linked (GlcNAc...) asparagine glycan is linked to Asn32. The Expansin-like EG45 domain occupies 61-172 (SGACGYKDVD…KEKGSEEWKA (112 aa)). Disulfide bonds link Cys64/Cys92 and Cys100/Cys106. The Expansin-like CBD domain maps to 142 to 223 (GKDEELLKYV…GWKADSVYKS (82 aa)).

The protein belongs to the expansin family. Expansin B subfamily.

The protein localises to the secreted. The protein resides in the cell wall. It localises to the membrane. May cause loosening and extension of plant cell walls by disrupting non-covalent bonding between cellulose microfibrils and matrix glucans. No enzymatic activity has been found. May be required for rapid internodal elongation in deepwater rice during submergence. The sequence is that of Expansin-B13 (EXPB13) from Oryza sativa subsp. japonica (Rice).